We begin with the raw amino-acid sequence, 480 residues long: Radical SAM Nalpha-GlyT isomerase (480 aa).

Residues Cys-125, Cys-129, and Cys-132 each coordinate iron-sulfur cluster. Residues 457-480 (KIVEPTPPEEDGGERKIIPITQID) are disordered.

It catalyses the reaction 5-N(alpha)-glycyl-dTMP in DNA + AH2 + S-adenosyl-L-methionine = 5-C(alpha)-glycyl-dTMP in DNA + 5'-deoxyadenosine + L-methionine + A + H(+). Functionally, isomerizes 5-N-alpha-glycinylthymidine (Nalpha-GlyT) into 5-Calpha-glycinylthymidine (Calpha-GlyT) as a step in the pathway leading to thymidine hypermodifications in the viral genome. As a final result of the pathway of hypermodification, 5-aminoethyl-2'-deoxyuridine (5-NedU) substitutes for about 30% of thymidines in the viral DNA. These modifications probably prevent degradation of viral genome by the host restriction-modification antiviral defense system. The protein is Radical SAM Nalpha-GlyT isomerase of Pseudomonas phage M6.